The chain runs to 243 residues: UPF0246 protein SpyM51747 (243 aa).

It belongs to the UPF0246 family.

The polypeptide is UPF0246 protein SpyM51747 (Streptococcus pyogenes serotype M5 (strain Manfredo)).